The sequence spans 79 residues: Small ribosomal subunit protein uS17 (79 aa).

This sequence belongs to the universal ribosomal protein uS17 family. Part of the 30S ribosomal subunit.

Functionally, one of the primary rRNA binding proteins, it binds specifically to the 5'-end of 16S ribosomal RNA. This is Small ribosomal subunit protein uS17 from Rhizobium rhizogenes (strain K84 / ATCC BAA-868) (Agrobacterium radiobacter).